We begin with the raw amino-acid sequence, 430 residues long: Tryptophan synthase beta chain (430 aa).

K95 carries the N6-(pyridoxal phosphate)lysine modification.

It belongs to the TrpB family. Tetramer of two alpha and two beta chains. Pyridoxal 5'-phosphate serves as cofactor.

The enzyme catalyses (1S,2R)-1-C-(indol-3-yl)glycerol 3-phosphate + L-serine = D-glyceraldehyde 3-phosphate + L-tryptophan + H2O. It participates in amino-acid biosynthesis; L-tryptophan biosynthesis; L-tryptophan from chorismate: step 5/5. The beta subunit is responsible for the synthesis of L-tryptophan from indole and L-serine. The sequence is that of Tryptophan synthase beta chain from Halobacterium salinarum (strain ATCC 29341 / DSM 671 / R1).